Here is a 167-residue protein sequence, read N- to C-terminus: Caltractin (167 aa).

Residues methionine 1–glycine 18 show a composition bias toward basic residues. The interval methionine 1 to lysine 23 is disordered. 4 EF-hand domains span residues glutamine 22–glutamate 57, methionine 58–glutamate 93, aspartate 95–asparagine 130, and phenylalanine 131–alanine 166. 19 residues coordinate Ca(2+): aspartate 35, aspartate 37, serine 39, threonine 41, glutamate 46, aspartate 71, aspartate 73, serine 75, glutamate 82, aspartate 108, aspartate 110, asparagine 112, lysine 114, aspartate 119, aspartate 144, aspartate 146, aspartate 148, glutamate 150, and glutamate 155.

Belongs to the centrin family.

The protein resides in the cytoplasm. It is found in the cytoskeleton. Its subcellular location is the microtubule organizing center. In terms of biological role, plays a fundamental role in microtubule-organizing center structure and function. The chain is Caltractin from Atriplex nummularia (Old man saltbush).